Here is a 252-residue protein sequence, read N- to C-terminus: Chitooligosaccharide deacetylase (252 aa).

The Mg(2+) site is built by His61 and His125.

It belongs to the YdjC deacetylase family. ChbG subfamily. As to quaternary structure, homodimer. Mg(2+) is required as a cofactor.

The protein resides in the cytoplasm. It carries out the reaction N,N'-diacetylchitobiose + H2O = N-acetyl-beta-D-glucosaminyl-(1-&gt;4)-D-glucosamine + acetate. It catalyses the reaction diacetylchitobiose-6'-phosphate + H2O = N'-monoacetylchitobiose-6'-phosphate + acetate. The protein operates within glycan degradation; chitin degradation. Its function is as follows. Involved in the degradation of chitin. ChbG is essential for growth on the acetylated chitooligosaccharides chitobiose and chitotriose but is dispensable for growth on cellobiose and chitosan dimer, the deacetylated form of chitobiose. Deacetylation of chitobiose-6-P and chitotriose-6-P is necessary for both the activation of the chb promoter by the regulatory protein ChbR and the hydrolysis of phosphorylated beta-glucosides by the phospho-beta-glucosidase ChbF. Catalyzes the removal of only one acetyl group from chitobiose-6-P to yield monoacetylchitobiose-6-P, the inducer of ChbR and the substrate of ChbF. This Salmonella typhi protein is Chitooligosaccharide deacetylase.